The sequence spans 131 residues: Arsenate reductase (131 aa).

Residues Cys10, Cys82, and Cys89 each act as nucleophile in the active site. Disulfide bonds link Cys10–Cys82 and Cys82–Cys89.

Belongs to the low molecular weight phosphotyrosine protein phosphatase family. Thioredoxin-coupled ArsC subfamily.

The protein resides in the cytoplasm. The catalysed reaction is arsenate + [thioredoxin]-dithiol + H(+) = arsenite + [thioredoxin]-disulfide + H2O. Its function is as follows. Catalyzes the reduction of arsenate [As(V)] to arsenite [As(III)]. The protein is Arsenate reductase of Staphylococcus aureus (strain bovine RF122 / ET3-1).